The chain runs to 277 residues: Acetyl-coenzyme A carboxylase carboxyl transferase subunit beta (277 aa).

The CoA carboxyltransferase N-terminal domain maps to 25-277 (LVRRCPVCHT…DLLRLHKGES (253 aa)). 4 residues coordinate Zn(2+): Cys-29, Cys-32, Cys-47, and Cys-50. Residues 29 to 50 (CPVCHTTFLTDHWEPTRLCPAC) form a C4-type zinc finger.

It belongs to the AccD/PCCB family. Acetyl-CoA carboxylase is a heterohexamer composed of biotin carboxyl carrier protein (AccB), biotin carboxylase (AccC) and two subunits each of ACCase subunit alpha (AccA) and ACCase subunit beta (AccD). Requires Zn(2+) as cofactor.

The protein resides in the cytoplasm. It catalyses the reaction N(6)-carboxybiotinyl-L-lysyl-[protein] + acetyl-CoA = N(6)-biotinyl-L-lysyl-[protein] + malonyl-CoA. Its pathway is lipid metabolism; malonyl-CoA biosynthesis; malonyl-CoA from acetyl-CoA: step 1/1. Component of the acetyl coenzyme A carboxylase (ACC) complex. Biotin carboxylase (BC) catalyzes the carboxylation of biotin on its carrier protein (BCCP) and then the CO(2) group is transferred by the transcarboxylase to acetyl-CoA to form malonyl-CoA. The protein is Acetyl-coenzyme A carboxylase carboxyl transferase subunit beta of Levilactobacillus brevis (strain ATCC 367 / BCRC 12310 / CIP 105137 / JCM 1170 / LMG 11437 / NCIMB 947 / NCTC 947) (Lactobacillus brevis).